The following is a 98-amino-acid chain: MSMVYINIFLAFILSLMGMLVYRSHLMSSLLCLEGMMLSLFVMMSVTILNNHLTLASMMPIVLLVFAACEAALGLSLLVMVSNTYGTDYVQNLNLLQC.

Helical transmembrane passes span 1–21, 29–49, and 61–81; these read MSMV…GMLV, SLLC…VTIL, and IVLL…LVMV.

This sequence belongs to the complex I subunit 4L family. Core subunit of respiratory chain NADH dehydrogenase (Complex I) which is composed of 45 different subunits.

The protein resides in the mitochondrion inner membrane. It catalyses the reaction a ubiquinone + NADH + 5 H(+)(in) = a ubiquinol + NAD(+) + 4 H(+)(out). In terms of biological role, core subunit of the mitochondrial membrane respiratory chain NADH dehydrogenase (Complex I) which catalyzes electron transfer from NADH through the respiratory chain, using ubiquinone as an electron acceptor. Part of the enzyme membrane arm which is embedded in the lipid bilayer and involved in proton translocation. In Canis latrans (Coyote), this protein is NADH-ubiquinone oxidoreductase chain 4L (MT-ND4L).